Reading from the N-terminus, the 458-residue chain is MIVNISAKMILSICFTFLSFFKATHAMDLDTTSKTSICDATALIQGGMLDYYEGTRYGGTVGMFQSPYYWWHAGEAFGGMLENWFLCENDTYQELLYDALLAQTGSNYDYIPSNQTMVEGNDDQGIWGITVMGAVERNFTDPGDGKPGWLAMVQAVFNTMYSRWDSEHCGGGLRWQIFTWNSGYNYKNTVSNACLFQIAARLGRYTGNTTYLEVAEQVFDWLVDVGYVVLNDTANVFDGAEIDTNCTDITKIEWTYNHGIVLGGLAYMYNATNGTGEWETSLTKILNGAKSYFFKDSIMYESACQDYGTCNTDQRTFKSIFSRMLGLTSVMAPFTRDTIDDLIKTSAEAAAKSCNGGTDGHTCGLNWQKQTNDGYYGLGEQMSALEVIQNLLIHDRPAPYKEDNGGTSKGDANAGMNSSTTNVLQNNLNIKKGDRAGAAIITAVILSVLTGGAVWMLF.

The N-terminal stretch at 1–26 is a signal peptide; the sequence is MIVNISAKMILSICFTFLSFFKATHA. Residues N89, N114, N138, N208, N231, N245, N270, N273, and N417 are each glycosylated (N-linked (GlcNAc...) asparagine). The disordered stretch occupies residues 399–418; sequence PYKEDNGGTSKGDANAGMNS. G437 carries the GPI-anchor amidated glycine lipid modification. The propeptide at 438–458 is removed in mature form; sequence AAIITAVILSVLTGGAVWMLF.

This sequence belongs to the glycosyl hydrolase 76 family. In terms of processing, N-glycosylated.

The protein resides in the cell membrane. The catalysed reaction is Random hydrolysis of (1-&gt;6)-alpha-D-mannosidic linkages in unbranched (1-&gt;6)-mannans.. In terms of biological role, required for normal synthesis of the cell wall. The sequence is that of Mannan endo-1,6-alpha-mannosidase DFG5 (DFG5) from Saccharomyces cerevisiae (strain ATCC 204508 / S288c) (Baker's yeast).